The following is a 395-amino-acid chain: uncharacterized protein (395 aa).

Disordered regions lie at residues 185–282 (RREV…SSTA) and 316–372 (GSST…TCSS). Positions 248–257 (LHLRTRHPHR) are enriched in basic residues. The segment covering 342–360 (ARASTHSRSSPSASANSRY) has biased composition (low complexity).

This is an uncharacterized protein from Streptomyces fradiae (Streptomyces roseoflavus).